A 321-amino-acid polypeptide reads, in one-letter code: Malate dehydrogenase (321 aa).

NAD(+)-binding positions include 10–15 and D34; that span reads GAGQIG. Positions 83 and 89 each coordinate substrate. NAD(+) contacts are provided by residues N96 and 119-121; that span reads VTN. The substrate site is built by N121 and R152. H176 serves as the catalytic Proton acceptor.

This sequence belongs to the LDH/MDH superfamily. MDH type 3 family.

The enzyme catalyses (S)-malate + NAD(+) = oxaloacetate + NADH + H(+). Its function is as follows. Catalyzes the reversible oxidation of malate to oxaloacetate. This is Malate dehydrogenase from Azorhizobium caulinodans (strain ATCC 43989 / DSM 5975 / JCM 20966 / LMG 6465 / NBRC 14845 / NCIMB 13405 / ORS 571).